The sequence spans 234 residues: Transcription factor bHLH160 (234 aa).

Over residues 1 to 13 (MSSQPNHQTSISS) the composition is skewed to polar residues. The disordered stretch occupies residues 1 to 67 (MSSQPNHQTS…GAAKKQDHNA (67 aa)). Over residues 27–37 (IVEKESAEKDT) the composition is skewed to basic and acidic residues. The 56-residue stretch at 60–115 (AKKQDHNAKERLRRMRLHASYLTLGTLLPDHSSSSSKKKWSAPSIIDNVITYIPKL) folds into the bHLH domain.

This sequence belongs to the bHLH protein family.

It is found in the nucleus. This Arabidopsis thaliana (Mouse-ear cress) protein is Transcription factor bHLH160.